The chain runs to 1032 residues: Importin beta-like protein KAP120 (1032 aa).

An N-acetylalanine modification is found at Ala2. The Importin N-terminal domain maps to 31-103; the sequence is AEQQLRQWET…RGRLFEMIDE (73 aa).

This sequence belongs to the importin beta family. Interacts with GTP-bound GSP1 and RFP1. Associates with the nuclear pore complex.

Its subcellular location is the cytoplasm. It is found in the nucleus. In terms of biological role, functions in nuclear protein import as nuclear transport receptor. Serves as receptor for nuclear localization signals (NLS) in cargo substrates. Thought to mediate docking of the importin/substrate complex to the nuclear pore complex (NPC) through binding to nucleoporin and the complex is subsequently translocated through the pore by an energy requiring, RAN-dependent mechanism. Required for nuclear import of Ho endonuclease and RFP1, and involved in rRNA-processing and assembly or export of 60S ribosomal subunits. The polypeptide is Importin beta-like protein KAP120 (KAP120) (Saccharomyces cerevisiae (strain ATCC 204508 / S288c) (Baker's yeast)).